The following is a 787-amino-acid chain: Glutamine-dependent NAD(+) synthetase (787 aa).

The 271-residue stretch at 5–275 (VTVAVSTLNQ…VEVTLATIDL (271 aa)) folds into the CN hydrolase domain. Catalysis depends on glutamate 45, which acts as the Proton acceptor; for glutaminase activity. The For glutaminase activity role is filled by lysine 114. Cysteine 175 functions as the Nucleophile; for glutaminase activity in the catalytic mechanism. Residues 325-787 (MHTPEEEIAL…KIKDRTGIPV (463 aa)) form a ligase region. 355–362 (PLSGGVDS) contributes to the ATP binding site. Residue serine 357 is part of the active site. Residue serine 703 is modified to Phosphoserine.

It in the C-terminal section; belongs to the NAD synthetase family.

It carries out the reaction deamido-NAD(+) + L-glutamine + ATP + H2O = L-glutamate + AMP + diphosphate + NAD(+) + H(+). The protein operates within cofactor biosynthesis; NAD(+) biosynthesis; NAD(+) from deamido-NAD(+) (L-Gln route): step 1/1. In terms of biological role, catalyzes the ATP-dependent amidation of deamido-NAD to form NAD. Uses L-glutamine as a nitrogen source. Because of its role in energy metabolism, involved in the modulation of aged-related cardiac function, mobility, and lifespan. The polypeptide is Glutamine-dependent NAD(+) synthetase (Drosophila melanogaster (Fruit fly)).